Consider the following 64-residue polypeptide: Large ribosomal subunit protein bL35 (64 aa).

The protein belongs to the bacterial ribosomal protein bL35 family.

This Ureaplasma parvum serovar 3 (strain ATCC 27815 / 27 / NCTC 11736) protein is Large ribosomal subunit protein bL35.